The chain runs to 491 residues: Cobyric acid synthase (491 aa).

One can recognise a GATase cobBQ-type domain in the interval glutamate 250 to tryptophan 439. Cysteine 331 acts as the Nucleophile in catalysis. Residue histidine 431 is part of the active site.

It belongs to the CobB/CobQ family. CobQ subfamily.

It functions in the pathway cofactor biosynthesis; adenosylcobalamin biosynthesis. In terms of biological role, catalyzes amidations at positions B, D, E, and G on adenosylcobyrinic A,C-diamide. NH(2) groups are provided by glutamine, and one molecule of ATP is hydrogenolyzed for each amidation. The sequence is that of Cobyric acid synthase from Synechococcus elongatus (strain ATCC 33912 / PCC 7942 / FACHB-805) (Anacystis nidulans R2).